Here is a 231-residue protein sequence, read N- to C-terminus: Urease accessory protein UreF (231 aa).

This sequence belongs to the UreF family. As to quaternary structure, ureD, UreF and UreG form a complex that acts as a GTP-hydrolysis-dependent molecular chaperone, activating the urease apoprotein by helping to assemble the nickel containing metallocenter of UreC. The UreE protein probably delivers the nickel.

It localises to the cytoplasm. Required for maturation of urease via the functional incorporation of the urease nickel metallocenter. The protein is Urease accessory protein UreF of Marinobacter nauticus (strain ATCC 700491 / DSM 11845 / VT8) (Marinobacter aquaeolei).